The following is a 334-amino-acid chain: D-fructose 1,6-bisphosphatase class 2/sedoheptulose 1,7-bisphosphatase (334 aa).

Mn(2+)-binding residues include Asp-33, Glu-57, Asp-85, and Glu-88. Substrate-binding positions include 88 to 90 (EGT), Tyr-119, 164 to 166 (RAR), and 186 to 188 (DGD). Glu-213 contacts Mn(2+).

Belongs to the FBPase class 2 family. In terms of assembly, homotetramer. The cofactor is Mn(2+).

It carries out the reaction beta-D-fructose 1,6-bisphosphate + H2O = beta-D-fructose 6-phosphate + phosphate. The enzyme catalyses D-sedoheptulose 1,7-bisphosphate + H2O = D-sedoheptulose 7-phosphate + phosphate. The protein operates within carbohydrate biosynthesis; Calvin cycle. In terms of biological role, catalyzes the hydrolysis of fructose 1,6-bisphosphate (Fru 1,6-P2) and sedoheptulose 1,7-bisphosphate (Sed 1,7-P2) to fructose 6-phosphate and sedoheptulose 7-phosphate, respectively. The polypeptide is D-fructose 1,6-bisphosphatase class 2/sedoheptulose 1,7-bisphosphatase (Parasynechococcus marenigrum (strain WH8102)).